Consider the following 85-residue polypeptide: uncharacterized protein (85 aa).

This is an uncharacterized protein from Saimiriine herpesvirus 2 (strain 488) (SaHV-2).